We begin with the raw amino-acid sequence, 627 residues long: Protein zyg-11 homolog A (627 aa).

3 LRR repeats span residues 123–146 (LPNLGSLDISNTLVTNISALLSCK), 203–227 (LPNLTSLDISGGTDVTDQAVESFLQ), and 409–432 (ITSILALKLSPEEMGQLQEELIMA).

Belongs to the zyg-11 family.

Functionally, probably acts as a target recruitment subunit in an E3 ubiquitin ligase complex ZYGA-CUL2-elongin BC. The sequence is that of Protein zyg-11 homolog A (Zyg11a) from Mus musculus (Mouse).